The chain runs to 198 residues: Peptide methionine sulfoxide reductase MsrA 2 (198 aa).

Cys-32 is an active-site residue.

The protein belongs to the MsrA Met sulfoxide reductase family.

It carries out the reaction L-methionyl-[protein] + [thioredoxin]-disulfide + H2O = L-methionyl-(S)-S-oxide-[protein] + [thioredoxin]-dithiol. The catalysed reaction is [thioredoxin]-disulfide + L-methionine + H2O = L-methionine (S)-S-oxide + [thioredoxin]-dithiol. Functionally, has an important function as a repair enzyme for proteins that have been inactivated by oxidation. Catalyzes the reversible oxidation-reduction of methionine sulfoxide in proteins to methionine. In Rhizobium meliloti (strain 1021) (Ensifer meliloti), this protein is Peptide methionine sulfoxide reductase MsrA 2 (msrA2).